A 260-amino-acid polypeptide reads, in one-letter code: Metallo-beta-lactamase domain-containing protein 1 (260 aa).

Zn(2+) is bound by residues His118, His120, Asp122, His123, His173, Asp196, and His235.

It belongs to the metallo-beta-lactamase superfamily. Glyoxalase II family. As to quaternary structure, homodimer. It depends on Zn(2+) as a cofactor.

It is found in the cytoplasm. It localises to the cytosol. The protein resides in the nucleus. It catalyses the reaction a ribonucleotidyl-ribonucleotide-RNA + H2O = a 3'-end ribonucleotide-RNA + a 5'-end 5'-phospho-ribonucleoside-RNA + H(+). In terms of biological role, endoribonuclease that catalyzes the hydrolysis of histone-coding pre-mRNA 3'-end. Involved in histone pre-mRNA processing during the S-phase of the cell cycle, which is required for entering/progressing through S-phase. Cleaves histone pre-mRNA at a major and a minor cleavage site after the 5'-ACCCA-3' and the 5'-ACCCACA-3' sequence, respectively, and located downstream of the stem-loop. May require the presence of the HDE element located at the histone pre-RNA 3'-end to avoid non-specific cleavage. This chain is Metallo-beta-lactamase domain-containing protein 1, found in Mus musculus (Mouse).